The primary structure comprises 323 residues: Protoheme IX farnesyltransferase (323 aa).

8 consecutive transmembrane segments (helical) span residues 50 to 70, 97 to 117, 118 to 138, 150 to 170, 184 to 204, 231 to 248, 252 to 274, and 293 to 313; these read IVLI…ANTF, NRDA…WLWL, LCDS…YIFV, NIVW…AVIV, AIVL…ALAM, IVWY…LIPA, IYAA…LHLG, and YLAV…ETIG.

Belongs to the UbiA prenyltransferase family. Protoheme IX farnesyltransferase subfamily.

It localises to the cell membrane. It carries out the reaction heme b + (2E,6E)-farnesyl diphosphate + H2O = Fe(II)-heme o + diphosphate. It functions in the pathway porphyrin-containing compound metabolism; heme O biosynthesis; heme O from protoheme: step 1/1. Its function is as follows. Converts heme B (protoheme IX) to heme O by substitution of the vinyl group on carbon 2 of heme B porphyrin ring with a hydroxyethyl farnesyl side group. This Corynebacterium glutamicum (strain R) protein is Protoheme IX farnesyltransferase.